The sequence spans 466 residues: Coagulation factor VII (466 aa).

An N-terminal signal peptide occupies residues 1 to 20; that stretch reads MVSQALRLLCLLLGLQGCLA. Residues 21–60 constitute a propeptide that is removed on maturation; it reads AGGVAEASGGETRDXXWKPGPHRVFITQEEAHGVLHRRRR. The 45-residue stretch at 61-105 folds into the Gla domain; it reads ANAFLEELRPGSLERECKEEQCSFEEAREIFKDLERTKLFWISYS. 10 positions are modified to 4-carboxyglutamate: Glu66, Glu67, Glu74, Glu76, Glu79, Glu80, Glu85, Glu86, Glu89, and Glu95. Residues Cys77 and Cys82 are joined by a disulfide bond. In terms of domain architecture, EGF-like 1; calcium-binding spans 106–142; it reads DGDQCASSPCQNGGSCKDQLQSYICFCLPAFEGRNCE. Intrachain disulfides connect Cys110-Cys121, Cys115-Cys130, Cys132-Cys141, Cys151-Cys162, Cys158-Cys172, Cys174-Cys187, Cys195-Cys322, Cys219-Cys224, Cys238-Cys254, and Cys370-Cys389. Ser112 carries an O-linked (Glc...) serine; alternate glycan. An O-linked (Xyl...) serine; alternate glycan is attached at Ser112. An O-linked (Fuc) serine glycan is attached at Ser120. Asp123 is subject to (3R)-3-hydroxyaspartate. The EGF-like 2 domain maps to 147-188; that stretch reads DQLICVNENGGCEQYCSDHTGTKRSCRCHEGYSLLADGVSCT. A glycan (N-linked (GlcNAc...) asparagine) is linked at Asn205. One can recognise a Peptidase S1 domain in the interval 213–452; sequence IVGGKVCPKG…YIEWLQKLMR (240 aa). Residues His253 and Asp302 each act as charge relay system in the active site. N-linked (GlcNAc...) asparagine glycosylation occurs at Asn382. Asp398 serves as a coordination point for substrate. Cys400 and Cys428 are disulfide-bonded. Residue Ser404 is the Charge relay system of the active site.

It belongs to the peptidase S1 family. As to quaternary structure, heterodimer of a light chain and a heavy chain linked by a disulfide bond. In terms of processing, the vitamin K-dependent, enzymatic carboxylation of some glutamate residues allows the modified protein to bind calcium. Post-translationally, the iron and 2-oxoglutarate dependent 3-hydroxylation of aspartate and asparagine is (R) stereospecific within EGF domains. O-glycosylated. O-fucosylated by POFUT1 on a conserved serine or threonine residue found in the consensus sequence C2-X(4,5)-[S/T]-C3 of EGF domains, where C2 and C3 are the second and third conserved cysteines. In terms of processing, can be either O-glucosylated or O-xylosylated at Ser-112 by POGLUT1.

Its subcellular location is the secreted. It carries out the reaction Selective cleavage of Arg-|-Ile bond in factor X to form factor Xa.. Initiates the extrinsic pathway of blood coagulation. Serine protease that circulates in the blood in a zymogen form. Factor VII is converted to factor VIIa by factor Xa, factor XIIa, factor IXa, or thrombin by minor proteolysis. In the presence of tissue factor and calcium ions, factor VIIa then converts factor X to factor Xa by limited proteolysis. Factor VIIa also converts factor IX to factor IXa in the presence of tissue factor and calcium. The sequence is that of Coagulation factor VII (F7) from Pan troglodytes (Chimpanzee).